Here is a 318-residue protein sequence, read N- to C-terminus: Ferredoxin--NADP reductase (318 aa).

Positions 33, 41, 46, 84, 115, 276, and 316 each coordinate FAD.

This sequence belongs to the ferredoxin--NADP reductase type 2 family. As to quaternary structure, homodimer. The cofactor is FAD.

It carries out the reaction 2 reduced [2Fe-2S]-[ferredoxin] + NADP(+) + H(+) = 2 oxidized [2Fe-2S]-[ferredoxin] + NADPH. The chain is Ferredoxin--NADP reductase from Lactobacillus gasseri (strain ATCC 33323 / DSM 20243 / BCRC 14619 / CIP 102991 / JCM 1131 / KCTC 3163 / NCIMB 11718 / NCTC 13722 / AM63).